Consider the following 304-residue polypeptide: Murein tetrapeptide carboxypeptidase (304 aa).

Residue serine 106 is the Nucleophile of the active site. Residues glutamate 200 and histidine 270 each act as charge relay system in the active site.

It belongs to the peptidase S66 family.

Its subcellular location is the cytoplasm. It catalyses the reaction N-acetyl-D-glucosaminyl-N-acetylmuramoyl-L-alanyl-meso-2,6-diaminoheptanedioyl-D-alanine + H2O = N-acetyl-D-glucosaminyl-N-acetylmuramoyl-L-alanyl-meso-2,6-diaminoheptanedioate + D-alanine. It participates in cell wall biogenesis; peptidoglycan recycling. In terms of biological role, releases the terminal D-alanine residue from the cytoplasmic tetrapeptide recycling product L-Ala-gamma-D-Glu-meso-Dap-D-Ala. Can also cleave D-Ala from murein derivatives containing the tetrapeptide, i.e. MurNAc-tetrapeptide, UDP-MurNAc-tetrapeptide, GlcNAc-MurNAc-tetrapeptide, and GlcNAc-anhMurNAc-tetrapeptide. Does not act on murein sacculi or cross-linked muropeptides. The tripeptides produced by the LcdA reaction can then be reused as peptidoglycan building blocks; LcdA is thereby involved in murein recycling. This is Murein tetrapeptide carboxypeptidase (ldcA) from Escherichia coli O6:H1 (strain CFT073 / ATCC 700928 / UPEC).